The chain runs to 196 residues: Transcription repressor OFP10 (196 aa).

Positions 100–159 constitute an OVATE domain; that stretch reads MAKESINPFEDYKKSMNQMIEERYIETESELKELLRCFLDINPSPQHNLIVRAFVDVCSH.

Expressed in roots, cauline leaves, shoots, stems, flower buds and siliques.

It is found in the nucleus. In terms of biological role, transcriptional repressor that may regulate multiple aspects of plant growth and development through the regulation of BEL1-LIKE (BLH) and KNOX TALE (KNAT) homeodomain transcription factors. The polypeptide is Transcription repressor OFP10 (OFP10) (Arabidopsis thaliana (Mouse-ear cress)).